The chain runs to 192 residues: uncharacterized protein (192 aa).

The Nudix hydrolase domain occupies 29 to 160; it reads HRQAAVLIPI…PLDIYRRGDS (132 aa). A Nudix box motif is present at residues 67-89; that stretch reads GAVDDTDTSVIAAALREAEEEVA. Positions 83 and 87 each coordinate Mg(2+).

Belongs to the Nudix hydrolase family. PCD1 subfamily. Mn(2+) is required as a cofactor. It depends on Mg(2+) as a cofactor.

Its function is as follows. Probably mediates the hydrolysis of some nucleoside diphosphate derivatives. This is an uncharacterized protein from Escherichia coli O6:H1 (strain CFT073 / ATCC 700928 / UPEC).